We begin with the raw amino-acid sequence, 309 residues long: Ribonuclease Z (309 aa).

7 residues coordinate Zn(2+): His-63, His-65, Asp-67, His-68, His-145, Asp-216, and His-274. Asp-67 functions as the Proton acceptor in the catalytic mechanism.

The protein belongs to the RNase Z family. Homodimer. Requires Zn(2+) as cofactor.

It carries out the reaction Endonucleolytic cleavage of RNA, removing extra 3' nucleotides from tRNA precursor, generating 3' termini of tRNAs. A 3'-hydroxy group is left at the tRNA terminus and a 5'-phosphoryl group is left at the trailer molecule.. In terms of biological role, zinc phosphodiesterase, which displays some tRNA 3'-processing endonuclease activity. Probably involved in tRNA maturation, by removing a 3'-trailer from precursor tRNA. In Streptococcus equi subsp. zooepidemicus (strain H70), this protein is Ribonuclease Z.